A 261-amino-acid chain; its full sequence is Potassium/proton antiporter CemA (261 aa).

A run of 3 helical transmembrane segments spans residues 138-158 (IISH…CLIL), 186-206 (ILLV…ELMI), and 221-241 (IISG…KYWI).

The protein belongs to the CemA family.

The protein resides in the plastid. Its subcellular location is the chloroplast inner membrane. The catalysed reaction is K(+)(in) + H(+)(out) = K(+)(out) + H(+)(in). Contributes to K(+)/H(+) antiport activity by supporting proton efflux to control proton extrusion and homeostasis in chloroplasts in a light-dependent manner to modulate photosynthesis. Prevents excessive induction of non-photochemical quenching (NPQ) under continuous-light conditions. Indirectly promotes efficient inorganic carbon uptake into chloroplasts. The polypeptide is Potassium/proton antiporter CemA (Cryptomeria japonica (Japanese cedar)).